Here is a 208-residue protein sequence, read N- to C-terminus: Large ribosomal subunit protein uL4 (208 aa).

Positions 45-85 are disordered; the sequence is RQGTHKAKTRAQVRGGGRKPYRQKGTGNARQGSTRSPLMIG. A compositionally biased stretch (basic residues) spans 46 to 66; sequence QGTHKAKTRAQVRGGGRKPYR. The span at 69 to 80 shows a compositional bias: polar residues; that stretch reads GTGNARQGSTRS.

This sequence belongs to the universal ribosomal protein uL4 family. Part of the 50S ribosomal subunit.

Functionally, one of the primary rRNA binding proteins, this protein initially binds near the 5'-end of the 23S rRNA. It is important during the early stages of 50S assembly. It makes multiple contacts with different domains of the 23S rRNA in the assembled 50S subunit and ribosome. In terms of biological role, forms part of the polypeptide exit tunnel. The polypeptide is Large ribosomal subunit protein uL4 (Chlorobium phaeobacteroides (strain DSM 266 / SMG 266 / 2430)).